Here is a 176-residue protein sequence, read N- to C-terminus: Flavodoxin 1 (176 aa).

A Flavodoxin-like domain is found at 4–165 (HGIFFGSDTG…RVEKWVKQIS (162 aa)).

Belongs to the flavodoxin family. Requires FMN as cofactor.

Low-potential electron donor to a number of redox enzymes. The polypeptide is Flavodoxin 1 (fldA) (Shigella flexneri).